A 474-amino-acid chain; its full sequence is Aspartyl/glutamyl-tRNA(Asn/Gln) amidotransferase subunit B (474 aa).

The protein belongs to the GatB/GatE family. GatB subfamily. In terms of assembly, heterotrimer of A, B and C subunits.

The enzyme catalyses L-glutamyl-tRNA(Gln) + L-glutamine + ATP + H2O = L-glutaminyl-tRNA(Gln) + L-glutamate + ADP + phosphate + H(+). It catalyses the reaction L-aspartyl-tRNA(Asn) + L-glutamine + ATP + H2O = L-asparaginyl-tRNA(Asn) + L-glutamate + ADP + phosphate + 2 H(+). Its function is as follows. Allows the formation of correctly charged Asn-tRNA(Asn) or Gln-tRNA(Gln) through the transamidation of misacylated Asp-tRNA(Asn) or Glu-tRNA(Gln) in organisms which lack either or both of asparaginyl-tRNA or glutaminyl-tRNA synthetases. The reaction takes place in the presence of glutamine and ATP through an activated phospho-Asp-tRNA(Asn) or phospho-Glu-tRNA(Gln). The sequence is that of Aspartyl/glutamyl-tRNA(Asn/Gln) amidotransferase subunit B from Limosilactobacillus reuteri (strain DSM 20016) (Lactobacillus reuteri).